A 327-amino-acid polypeptide reads, in one-letter code: uncharacterized protein (327 aa).

Disordered regions lie at residues 127-170 (LSEF…GIYR) and 298-327 (NFED…LKRR). Residues S153, S154, and S309 each carry the phosphoserine modification. Over residues 317–327 (YRKRKKNLKRR) the composition is skewed to basic residues.

This is an uncharacterized protein from Schizosaccharomyces pombe (strain 972 / ATCC 24843) (Fission yeast).